Here is a 149-residue protein sequence, read N- to C-terminus: Transcriptional repressor NrdR (149 aa).

The segment at 3–34 (CPFCTAEETKVIDSRLAADGYQIRRRRECIGC) is a zinc-finger region. One can recognise an ATP-cone domain in the interval 49–139 (PYIIKNNGNR…VYLSFDDIEE (91 aa)).

The protein belongs to the NrdR family. Zn(2+) serves as cofactor.

Negatively regulates transcription of bacterial ribonucleotide reductase nrd genes and operons by binding to NrdR-boxes. This is Transcriptional repressor NrdR from Haemophilus ducreyi (strain 35000HP / ATCC 700724).